The primary structure comprises 244 residues: Flavin-dependent thymidylate synthase (244 aa).

In terms of domain architecture, ThyX spans 17 to 239 (ITVELVKHSA…PETHAAFEKQ (223 aa)). FAD-binding positions include S68, 91 to 93 (RHR), and E99. Residues 88-91 (EFMR), 99-103 (EESGR), and R171 each bind dUMP. A ThyX motif motif is present at residues 91–101 (RHRIASYNEES). FAD-binding positions include 187–189 (NAR) and N193. Position 198 (R198) interacts with dUMP. R198 functions as the Involved in ionization of N3 of dUMP, leading to its activation in the catalytic mechanism.

The protein belongs to the thymidylate synthase ThyX family. As to quaternary structure, homotetramer. Requires FAD as cofactor.

The enzyme catalyses dUMP + (6R)-5,10-methylene-5,6,7,8-tetrahydrofolate + NADPH + H(+) = dTMP + (6S)-5,6,7,8-tetrahydrofolate + NADP(+). Its pathway is pyrimidine metabolism; dTTP biosynthesis. In terms of biological role, catalyzes the reductive methylation of 2'-deoxyuridine-5'-monophosphate (dUMP) to 2'-deoxythymidine-5'-monophosphate (dTMP) while utilizing 5,10-methylenetetrahydrofolate (mTHF) as the methyl donor, and NADPH and FADH(2) as the reductant. In Tropheryma whipplei (strain Twist) (Whipple's bacillus), this protein is Flavin-dependent thymidylate synthase.